Here is a 341-residue protein sequence, read N- to C-terminus: Pre-mRNA-processing protein 45 (341 aa).

Disordered stretches follow at residues 1–31 (MFSS…HEKS), 181–226 (NYQE…EDQA), and 302–341 (EQHE…KTKY). A compositionally biased stretch (basic residues) spans 192 to 201 (FKLRKNRHKN). Basic and acidic residues predominate over residues 302 to 318 (EQHEKENKLKELADIAR).

It belongs to the SNW family. Associated with the spliceosome.

The protein resides in the nucleus. In terms of biological role, involved in pre-mRNA splicing. This is Pre-mRNA-processing protein 45 (PRP45) from Debaryomyces hansenii (strain ATCC 36239 / CBS 767 / BCRC 21394 / JCM 1990 / NBRC 0083 / IGC 2968) (Yeast).